Here is a 475-residue protein sequence, read N- to C-terminus: Ribulose bisphosphate carboxylase large chain (475 aa).

The propeptide occupies 1–2 (MS). N-acetylproline is present on P3. K14 is subject to N6,N6,N6-trimethyllysine. Substrate-binding residues include N123 and T173. K175 (proton acceptor) is an active-site residue. K177 is a substrate binding site. K201, D203, and E204 together coordinate Mg(2+). N6-carboxylysine is present on K201. H294 functions as the Proton acceptor in the catalytic mechanism. Substrate-binding residues include R295, H327, and S379.

This sequence belongs to the RuBisCO large chain family. Type I subfamily. In terms of assembly, heterohexadecamer of 8 large chains and 8 small chains; disulfide-linked. The disulfide link is formed within the large subunit homodimers. Mg(2+) is required as a cofactor. In terms of processing, the disulfide bond which can form in the large chain dimeric partners within the hexadecamer appears to be associated with oxidative stress and protein turnover.

It is found in the plastid. It localises to the chloroplast. The catalysed reaction is 2 (2R)-3-phosphoglycerate + 2 H(+) = D-ribulose 1,5-bisphosphate + CO2 + H2O. The enzyme catalyses D-ribulose 1,5-bisphosphate + O2 = 2-phosphoglycolate + (2R)-3-phosphoglycerate + 2 H(+). RuBisCO catalyzes two reactions: the carboxylation of D-ribulose 1,5-bisphosphate, the primary event in carbon dioxide fixation, as well as the oxidative fragmentation of the pentose substrate in the photorespiration process. Both reactions occur simultaneously and in competition at the same active site. The chain is Ribulose bisphosphate carboxylase large chain from Keteleeria davidiana (David's keteleeria).